A 506-amino-acid chain; its full sequence is 2-isopropylmalate synthase (506 aa).

The Pyruvate carboxyltransferase domain occupies 4–266 (ILFMDTTLRD…EPSMTLKEIK (263 aa)). 4 residues coordinate Mn(2+): Asp13, His201, His203, and Asn237. The segment at 390 to 506 (NITQLQVHFV…KLKSFIQLVK (117 aa)) is regulatory domain.

Belongs to the alpha-IPM synthase/homocitrate synthase family. LeuA type 1 subfamily. As to quaternary structure, homodimer. It depends on Mn(2+) as a cofactor.

It localises to the cytoplasm. It catalyses the reaction 3-methyl-2-oxobutanoate + acetyl-CoA + H2O = (2S)-2-isopropylmalate + CoA + H(+). Its pathway is amino-acid biosynthesis; L-leucine biosynthesis; L-leucine from 3-methyl-2-oxobutanoate: step 1/4. Catalyzes the condensation of the acetyl group of acetyl-CoA with 3-methyl-2-oxobutanoate (2-ketoisovalerate) to form 3-carboxy-3-hydroxy-4-methylpentanoate (2-isopropylmalate). This is 2-isopropylmalate synthase from Bacillus cereus (strain 03BB102).